A 320-amino-acid polypeptide reads, in one-letter code: tRNA dimethylallyltransferase (320 aa).

10–17 (GPTASGKT) serves as a coordination point for ATP. 12 to 17 (TASGKT) contacts substrate. Interaction with substrate tRNA regions lie at residues 35-38 (DSAL), 159-163 (QRIQR), and 241-246 (RCVGYR).

This sequence belongs to the IPP transferase family. Monomer. The cofactor is Mg(2+).

It carries out the reaction adenosine(37) in tRNA + dimethylallyl diphosphate = N(6)-dimethylallyladenosine(37) in tRNA + diphosphate. Catalyzes the transfer of a dimethylallyl group onto the adenine at position 37 in tRNAs that read codons beginning with uridine, leading to the formation of N6-(dimethylallyl)adenosine (i(6)A). This chain is tRNA dimethylallyltransferase, found in Aromatoleum aromaticum (strain DSM 19018 / LMG 30748 / EbN1) (Azoarcus sp. (strain EbN1)).